A 796-amino-acid chain; its full sequence is Protein translocase subunit SecA 2 (796 aa).

ATP-binding positions include Gln84, 102–106 (GEGKT), and Asp496.

The protein belongs to the SecA family. As to quaternary structure, monomer and homodimer. Part of the essential Sec protein translocation apparatus which comprises SecA, SecYEG and auxiliary proteins SecDF. Other proteins may also be involved.

It is found in the cell membrane. The protein resides in the cytoplasm. It catalyses the reaction ATP + H2O + cellular proteinSide 1 = ADP + phosphate + cellular proteinSide 2.. Part of the Sec protein translocase complex. Interacts with the SecYEG preprotein conducting channel. Has a central role in coupling the hydrolysis of ATP to the transfer of proteins into and across the cell membrane, serving as an ATP-driven molecular motor driving the stepwise translocation of polypeptide chains across the membrane. The protein is Protein translocase subunit SecA 2 of Staphylococcus aureus (strain Mu3 / ATCC 700698).